The chain runs to 168 residues: Phosphopantetheine adenylyltransferase (168 aa).

Thr-14 is a substrate binding site. Residues 14–15 and His-22 each bind ATP; that span reads TF. The substrate site is built by Lys-46, Leu-78, and Arg-92. ATP-binding positions include 93–95, Glu-103, and 128–134; these read GLR and YSFISSS.

Belongs to the bacterial CoaD family. Homohexamer. Requires Mg(2+) as cofactor.

The protein localises to the cytoplasm. It carries out the reaction (R)-4'-phosphopantetheine + ATP + H(+) = 3'-dephospho-CoA + diphosphate. Its pathway is cofactor biosynthesis; coenzyme A biosynthesis; CoA from (R)-pantothenate: step 4/5. Reversibly transfers an adenylyl group from ATP to 4'-phosphopantetheine, yielding dephospho-CoA (dPCoA) and pyrophosphate. This is Phosphopantetheine adenylyltransferase from Xanthomonas oryzae pv. oryzae (strain MAFF 311018).